The following is a 435-amino-acid chain: MTDLRRNRYSISAGVGKSVLDSLGKFYGSPKRQLPNKFEAGKEYTGYNAPWIPFALDWLKQGKYSSEWIAMGSLNEEPNNMIQLLKLITGDDGNSHLEKAQAATDLEYPVTKLLWNPSSVGSNTDSQLLASTDQQLRLWKTDFEAGIDSPLLCQASLSTHVKTHNNAPLTSFDWCKTDPSYIVVSSLDTTCTVWDIVAQQSKTQLIAHDKEVYDVAFLKDSINVFVSVGADGSVRMFDLRSLDHSTIIYEGDSTFWKRNGDYTNASPPVSAPLLRLSACDSDVNLMATFHHNSSDVQMIDIRVPGTAYATLRGHKGDVNAVKWMPGSKSKLATCGDDCVVSLWDLDQPVNPSPAPTLSVSGTTPGMTGSTSEYVTPVSSVNSMRETASPLNADNQYSPLLSWKLEHEVNNLSWSVKNDGLAVVYGKSLEILKVPQ.

3 WD repeats span residues 105–149 (DLEY…GIDS), 164–204 (HNNA…SKTQ), and 207–247 (AHDK…HSTI). A Phosphoserine modification is found at S266. The WD 4 repeat unit spans residues 313 to 353 (GHKGDVNAVKWMPGSKSKLATCGDDCVVSLWDLDQPVNPSP). The tract at residues 352–371 (SPAPTLSVSGTTPGMTGSTS) is disordered. A compositionally biased stretch (low complexity) spans 358–371 (SVSGTTPGMTGSTS). S388 carries the post-translational modification Phosphoserine.

Its subcellular location is the cytoplasm. It localises to the golgi apparatus. This is an uncharacterized protein from Schizosaccharomyces pombe (strain 972 / ATCC 24843) (Fission yeast).